A 121-amino-acid chain; its full sequence is Flagellar protein FliT (121 aa).

Residues 1–50 form a required for homodimerization region; sequence MNNAPHLYFAWQQLVEKSQLMLRLATEEQWDELIASEMAYVNAVQEIAHL. The tract at residues 60 to 98 is fliD binding; the sequence is MQEQLRPMLHLILDNESKVKQLLQIRMDELAKLVGQSSV.

This sequence belongs to the FliT family. In terms of assembly, homodimer. Interacts with FliD and FlhC.

It is found in the cytoplasm. It localises to the cytosol. In terms of biological role, dual-function protein that regulates the transcription of class 2 flagellar operons and that also acts as an export chaperone for the filament-capping protein FliD. As a transcriptional regulator, acts as an anti-FlhDC factor; it directly binds FlhC, thus inhibiting the binding of the FlhC/FlhD complex to class 2 promoters, resulting in decreased expression of class 2 flagellar operons. As a chaperone, effects FliD transition to the membrane by preventing its premature polymerization, and by directing it to the export apparatus. This chain is Flagellar protein FliT, found in Escherichia coli O17:K52:H18 (strain UMN026 / ExPEC).